We begin with the raw amino-acid sequence, 688 residues long: Glycine--tRNA ligase beta subunit (688 aa).

This sequence belongs to the class-II aminoacyl-tRNA synthetase family. In terms of assembly, tetramer of two alpha and two beta subunits.

It is found in the cytoplasm. The enzyme catalyses tRNA(Gly) + glycine + ATP = glycyl-tRNA(Gly) + AMP + diphosphate. This Histophilus somni (strain 2336) (Haemophilus somnus) protein is Glycine--tRNA ligase beta subunit.